The chain runs to 241 residues: Thiamine import ATP-binding protein ThiQ (241 aa).

Residues 7–235 enclose the ABC transporter domain; that stretch reads IRLSDVRFSY…AGPEALRHYI (229 aa). 37–44 provides a ligand contact to ATP; it reads GPSGSGKS.

This sequence belongs to the ABC transporter superfamily. Thiamine importer (TC 3.A.1.19.1) family. In terms of assembly, the complex is composed of two ATP-binding proteins (ThiQ), two transmembrane proteins (ThiP) and a solute-binding protein (ThiB).

Its subcellular location is the cell inner membrane. It catalyses the reaction thiamine(out) + ATP + H2O = thiamine(in) + ADP + phosphate + H(+). Its function is as follows. Part of the ABC transporter complex ThiBPQ involved in thiamine import. Responsible for energy coupling to the transport system. This is Thiamine import ATP-binding protein ThiQ from Brucella melitensis biotype 1 (strain ATCC 23456 / CCUG 17765 / NCTC 10094 / 16M).